The primary structure comprises 125 residues: Large-conductance mechanosensitive channel (125 aa).

A run of 3 helical transmembrane segments spans residues 19 to 39 (VGVIIGGAFTAIVNSLVKYII), 42 to 62 (FLGLFVGAIDFSDLVFKIGNA), and 66 to 86 (VGSFLNAVINFLIIAFVVFLM).

It belongs to the MscL family. Homopentamer.

It is found in the cell membrane. Its function is as follows. Channel that opens in response to stretch forces in the membrane lipid bilayer. May participate in the regulation of osmotic pressure changes within the cell. The sequence is that of Large-conductance mechanosensitive channel from Ligilactobacillus salivarius (strain UCC118) (Lactobacillus salivarius).